Reading from the N-terminus, the 230-residue chain is MVVFGYEAGTKPRDSGVVPVGTEEAPKVFKMAASMHGQPSPSLEDAKLRRPMVIEIIEKNFDYLRKEMTQNIYQMATFGTTAGFSGIFSNFLFRRCFKVKHDALKTYASLATLPFLSTVVTDKLFVIDALYSDNISKENCVFRSSLIGIVCGVFYPSSLAFTKNGRLATKYHTVPLPPKGRVLIHWMTLCQTQMKLMAIPLVFQIMFGILNGLYHYAVFEETLEKTIHEE.

The residue at position 34 (Ser34) is a Phosphoserine. The next 4 membrane-spanning stretches (helical) occupy residues 72 to 92 (IYQM…SNFL), 110 to 130 (LATL…IDAL), 141 to 161 (VFRS…SLAF), and 199 to 219 (IPLV…YAVF).

This sequence belongs to the TMEM126 family. Part of the mitochondrial complex I assembly/MCIA complex that comprises at least the core subunits TMEM126B, NDUFAF1, ECSIT and ACAD9 and complement subunits such as COA1 and TMEM186. Associates with the intermediate 370 kDa subcomplex of incompletely assembled complex I. Interacts with TMEM70.

It is found in the mitochondrion membrane. Its function is as follows. As part of the MCIA complex, involved in the assembly of the mitochondrial complex I. Participates in constructing the membrane arm of complex I. This Homo sapiens (Human) protein is Complex I assembly factor TMEM126B, mitochondrial.